The following is a 172-amino-acid chain: Small ribosomal subunit protein uS5 (172 aa).

The S5 DRBM domain maps to 17-80 (LREKMISVNR…EQARRNMFKV (64 aa)).

This sequence belongs to the universal ribosomal protein uS5 family. In terms of assembly, part of the 30S ribosomal subunit. Contacts proteins S4 and S8.

Its function is as follows. With S4 and S12 plays an important role in translational accuracy. In terms of biological role, located at the back of the 30S subunit body where it stabilizes the conformation of the head with respect to the body. The protein is Small ribosomal subunit protein uS5 of Burkholderia thailandensis (strain ATCC 700388 / DSM 13276 / CCUG 48851 / CIP 106301 / E264).